We begin with the raw amino-acid sequence, 317 residues long: Phosphatidylglycerol--prolipoprotein diacylglyceryl transferase 2 (317 aa).

Helical transmembrane passes span 19 to 39 (IPLRAYAFCIILGVFAAVWLG), 51 to 71 (GVIADVTLWAVPFGLVGGRLY), 93 to 113 (VWEGGLGIWGAIALGAVGAWI), and 120 to 140 (IPLPAFADAVAPGIVLAQAIG). A 1,2-diacyl-sn-glycero-3-phospho-(1'-sn-glycerol) is bound at residue arginine 141. The next 3 membrane-spanning stretches (helical) occupy residues 180–200 (PTFLYESLWNIGVAALILWAA), 211–230 (FALYVAAYTVGRFGTEYLRI), and 241–261 (LNNWTSVLVFLGAVACLVVSA). Residues 275–317 (GAGADGRTDDPRPADASVGLASGPPGNSTPRRATESWNVRNRS) are disordered. Over residues 299 to 317 (PGNSTPRRATESWNVRNRS) the composition is skewed to polar residues.

It belongs to the Lgt family.

The protein localises to the cell membrane. The enzyme catalyses L-cysteinyl-[prolipoprotein] + a 1,2-diacyl-sn-glycero-3-phospho-(1'-sn-glycerol) = an S-1,2-diacyl-sn-glyceryl-L-cysteinyl-[prolipoprotein] + sn-glycerol 1-phosphate + H(+). It participates in protein modification; lipoprotein biosynthesis (diacylglyceryl transfer). In terms of biological role, catalyzes the transfer of the diacylglyceryl group from phosphatidylglycerol to the sulfhydryl group of the N-terminal cysteine of a prolipoprotein, the first step in the formation of mature lipoproteins. The chain is Phosphatidylglycerol--prolipoprotein diacylglyceryl transferase 2 from Streptomyces coelicolor (strain ATCC BAA-471 / A3(2) / M145).